The chain runs to 298 residues: MSEAPQHIPVLVNECLSLFADRNPKFFCDVTLGAGGHAEAFLSAYPSIVSYDGSDRDTMALSLAKERLEKFGNRVHLHHASFEDLAQNPRENVYDGILADLGVSSMQLDTLSRGFSFQGDDHDLDMRMDTSKGTTASEVLNTLREEDLGRIFREYGEEPQWKNAAKAIVQFRRHKKIITVRDLKEATTRVFPSYRLRKKIHPLTLIFQALRVYVNQEDVQLKVFLESAMRWLAPEGRLIIISFCSSEDRPVKWFFREAEAMGVGKILTKKVVMPTYEETRKNPRCRSAKLRCFEKKSS.

S-adenosyl-L-methionine is bound by residues 35-37, Asp55, Phe82, Asp100, and Gln107; that span reads GGH.

This sequence belongs to the methyltransferase superfamily. RsmH family.

The protein resides in the cytoplasm. The enzyme catalyses cytidine(1402) in 16S rRNA + S-adenosyl-L-methionine = N(4)-methylcytidine(1402) in 16S rRNA + S-adenosyl-L-homocysteine + H(+). Functionally, specifically methylates the N4 position of cytidine in position 1402 (C1402) of 16S rRNA. In Chlamydia felis (strain Fe/C-56) (Chlamydophila felis), this protein is Ribosomal RNA small subunit methyltransferase H.